The following is a 246-amino-acid chain: uncharacterized protein (246 aa).

Positions 204-243 (TTKLKKLEKEIHELPYMLINGKITYEEYKKRIREIEKEIG) form a coiled coil.

This is an uncharacterized protein from Aquifex aeolicus (strain VF5).